Here is a 76-residue protein sequence, read N- to C-terminus: DNA-directed RNA polymerase subunit epsilon (76 aa).

It belongs to the RNA polymerase subunit epsilon family. In terms of assembly, RNAP is composed of a core of 2 alpha, a beta and a beta' subunit. The core is associated with a delta subunit, and at least one of epsilon or omega. When a sigma factor is associated with the core the holoenzyme is formed, which can initiate transcription.

The catalysed reaction is RNA(n) + a ribonucleoside 5'-triphosphate = RNA(n+1) + diphosphate. In terms of biological role, a non-essential component of RNA polymerase (RNAP). This chain is DNA-directed RNA polymerase subunit epsilon, found in Lactococcus lactis subsp. cremoris (strain MG1363).